Consider the following 235-residue polypeptide: Homeobox-leucine zipper protein ATHB-12 (235 aa).

Positions 27-86 form a DNA-binding region, homeobox; sequence KSNNQKRFSEEQIKSLELIFESETRLEPRKKVQVARELGLQPRQVAIWFQNKRARWKTKQ. The interval 87 to 122 is leucine-zipper; sequence LEKEYNTLRANYNNLASQFEIMKKEKQSLVSELQRL. 2 stretches are compositionally biased toward basic and acidic residues: residues 128–138 and 152–162; these read RPKEEKHHECC and HNGKSEPEGRL. Positions 128–167 are disordered; that stretch reads RPKEEKHHECCGDQGLALSSSTESHNGKSEPEGRLDQGSV.

It belongs to the HD-ZIP homeobox family. Class I subfamily. As to quaternary structure, interacts with TFIIB1. In terms of tissue distribution, widely expressed.

It is found in the nucleus. Its function is as follows. Probable transcription activator that may act as growth regulators in response to water deficit. The chain is Homeobox-leucine zipper protein ATHB-12 (ATHB-12) from Arabidopsis thaliana (Mouse-ear cress).